The following is a 301-amino-acid chain: tRNA pseudouridine synthase B (301 aa).

Residue D45 is the Nucleophile of the active site.

This sequence belongs to the pseudouridine synthase TruB family. Type 1 subfamily.

The enzyme catalyses uridine(55) in tRNA = pseudouridine(55) in tRNA. Responsible for synthesis of pseudouridine from uracil-55 in the psi GC loop of transfer RNAs. In Streptomyces coelicolor (strain ATCC BAA-471 / A3(2) / M145), this protein is tRNA pseudouridine synthase B.